The sequence spans 161 residues: Cyclic pyranopterin monophosphate synthase (161 aa).

Residues 75–77 (LCH) and 113–114 (ME) contribute to the substrate site. Aspartate 128 is an active-site residue.

Belongs to the MoaC family. In terms of assembly, homohexamer; trimer of dimers.

It carries out the reaction (8S)-3',8-cyclo-7,8-dihydroguanosine 5'-triphosphate = cyclic pyranopterin phosphate + diphosphate. It participates in cofactor biosynthesis; molybdopterin biosynthesis. Catalyzes the conversion of (8S)-3',8-cyclo-7,8-dihydroguanosine 5'-triphosphate to cyclic pyranopterin monophosphate (cPMP). The sequence is that of Cyclic pyranopterin monophosphate synthase from Cronobacter sakazakii (strain ATCC BAA-894) (Enterobacter sakazakii).